We begin with the raw amino-acid sequence, 63 residues long: Large ribosomal subunit protein bL32 (63 aa).

Residues Met-1–Arg-23 form a disordered region. The span at Lys-7–Ala-18 shows a compositional bias: basic residues.

It belongs to the bacterial ribosomal protein bL32 family.

The protein is Large ribosomal subunit protein bL32 of Prosthecochloris aestuarii (strain DSM 271 / SK 413).